Consider the following 255-residue polypeptide: L-seryl-tRNA(Sec) kinase (255 aa).

ATP is bound at residue 7-14 (GLPSVGKS).

This sequence belongs to the L-seryl-tRNA(Sec) kinase family.

It carries out the reaction L-seryl-tRNA(Sec) + ATP = O-phospho-L-seryl-tRNA(Sec) + ADP. The protein operates within aminoacyl-tRNA biosynthesis; selenocysteinyl-tRNA(Sec) biosynthesis; selenocysteinyl-tRNA(Sec) from L-seryl-tRNA(Sec) (archaeal/eukaryal route): step 1/2. Specifically phosphorylates seryl-tRNA(Sec) to O-phosphoseryl-tRNA(Sec), an activated intermediate for selenocysteine biosynthesis. This is L-seryl-tRNA(Sec) kinase (pstK) from Methanococcus maripaludis (strain DSM 14266 / JCM 13030 / NBRC 101832 / S2 / LL).